The sequence spans 298 residues: Putative GATA zinc finger domain-containing protein 25 (298 aa).

The stretch at 4–37 (DNKNKNDNYQESIQRIVNQRNNLLKEIENKINQQ) forms a coiled coil. A disordered region spans residues 148–227 (QQQLQQSHTK…RGRPSKPKPE (80 aa)). Positions 183–202 (EENEENEENEENEENEENEE) are enriched in acidic residues. Over residues 203-212 (NKEKDVEVAK) the composition is skewed to basic and acidic residues. Basic residues predominate over residues 214 to 223 (NKPKRGRPSK). The GATA-type; degenerate zinc-finger motif lies at 229–256 (CFRYGTRSCPYWRKNVIKGELVDVCNAC).

The sequence is that of Putative GATA zinc finger domain-containing protein 25 (gtaY) from Dictyostelium discoideum (Social amoeba).